Here is a 214-residue protein sequence, read N- to C-terminus: Probable transaldolase (214 aa).

Lys-83 (schiff-base intermediate with substrate) is an active-site residue.

The protein belongs to the transaldolase family. Type 3B subfamily.

It localises to the cytoplasm. It carries out the reaction D-sedoheptulose 7-phosphate + D-glyceraldehyde 3-phosphate = D-erythrose 4-phosphate + beta-D-fructose 6-phosphate. It functions in the pathway carbohydrate degradation; pentose phosphate pathway; D-glyceraldehyde 3-phosphate and beta-D-fructose 6-phosphate from D-ribose 5-phosphate and D-xylulose 5-phosphate (non-oxidative stage): step 2/3. Functionally, transaldolase is important for the balance of metabolites in the pentose-phosphate pathway. This chain is Probable transaldolase, found in Desulfosudis oleivorans (strain DSM 6200 / JCM 39069 / Hxd3) (Desulfococcus oleovorans).